The sequence spans 167 residues: Photosystem I assembly protein Ycf3 (167 aa).

TPR repeat units follow at residues 35 to 68 (AFAY…EVDA), 72 to 105 (SYIL…NPSL), and 120 to 153 (GEQA…APTN).

The protein belongs to the Ycf3 family.

It is found in the plastid. The protein resides in the chloroplast thylakoid membrane. In terms of biological role, essential for the assembly of the photosystem I (PSI) complex. May act as a chaperone-like factor to guide the assembly of the PSI subunits. The polypeptide is Photosystem I assembly protein Ycf3 (Stigeoclonium helveticum (Green alga)).